The chain runs to 434 residues: Meiosis-specific kinetochore protein (434 aa).

Disordered regions lie at residues 1–102 (MDKI…PCET) and 249–289 (VFAE…PDNK). Positions 46–62 (KGKEQGLRKITEKKELS) are enriched in basic and acidic residues. Polar residues predominate over residues 64 to 76 (LTGSSSQRPSLLS). Positions 334–336 (STP) match the POLO box domain (PBD)-binding motif. A required for localization to kinetochores region spans residues 391 to 394 (EICC). The disordered stretch occupies residues 404–424 (QMRRKDPAVKNRCSPPKDVPL).

As to quaternary structure, interacts with CENPC. Interacts with PLK1; required for recruitment of PLK1 at kinetochores. In terms of tissue distribution, germ cell-specific. Expressed in both testis and ovary. Not expressed in other tissues.

Its subcellular location is the chromosome. It localises to the centromere. The protein localises to the kinetochore. Key regulator of kinetochore function during meiosis I: required both for mono-orientation of kinetochores on sister chromosomes and protection of centromeric cohesin from separase-mediated cleavage. Acts by facilitating kinetochore mono-orientation during meiosis I, when kinetochores on sister chromosomes face the same direction and are thus captured and pulled by spindle fibers from the same pole. Also required to prevent cleavage of cohesin at centromeres during meiosis I, possibly by acting as a regulator of the shugoshin-dependent protection pathway. Acts in collaboration with PLK1: required for PLK1 enrichment to kinetochores. Not required during meiosis II or mitosis. The polypeptide is Meiosis-specific kinetochore protein (Mus musculus (Mouse)).